A 518-amino-acid chain; its full sequence is Glutamate--cysteine ligase (518 aa).

The protein belongs to the glutamate--cysteine ligase type 1 family. Type 1 subfamily.

It catalyses the reaction L-cysteine + L-glutamate + ATP = gamma-L-glutamyl-L-cysteine + ADP + phosphate + H(+). It participates in sulfur metabolism; glutathione biosynthesis; glutathione from L-cysteine and L-glutamate: step 1/2. The protein is Glutamate--cysteine ligase of Salmonella paratyphi C (strain RKS4594).